A 554-amino-acid polypeptide reads, in one-letter code: Arginine--tRNA ligase (554 aa).

Residues 132 to 142 (ANPTGPLHIGH) carry the 'HIGH' region motif.

The protein belongs to the class-I aminoacyl-tRNA synthetase family. In terms of assembly, monomer.

It localises to the cytoplasm. It carries out the reaction tRNA(Arg) + L-arginine + ATP = L-arginyl-tRNA(Arg) + AMP + diphosphate. The protein is Arginine--tRNA ligase of Pseudarthrobacter chlorophenolicus (strain ATCC 700700 / DSM 12829 / CIP 107037 / JCM 12360 / KCTC 9906 / NCIMB 13794 / A6) (Arthrobacter chlorophenolicus).